The following is a 449-amino-acid chain: Phosphoglucosamine mutase (449 aa).

Serine 101 acts as the Phosphoserine intermediate in catalysis. Residues serine 101, aspartate 240, aspartate 242, and aspartate 244 each coordinate Mg(2+). Serine 101 is modified (phosphoserine).

Belongs to the phosphohexose mutase family. Requires Mg(2+) as cofactor. Activated by phosphorylation.

It carries out the reaction alpha-D-glucosamine 1-phosphate = D-glucosamine 6-phosphate. Its function is as follows. Catalyzes the conversion of glucosamine-6-phosphate to glucosamine-1-phosphate. The polypeptide is Phosphoglucosamine mutase (Streptococcus mutans serotype c (strain ATCC 700610 / UA159)).